The chain runs to 733 residues: Ribosomal protein S6 kinase alpha-2 (733 aa).

Positions 59-318 (FELLKVLGQG…VEEIKRHPFF (260 aa)) constitute a Protein kinase 1 domain. Residues 65–73 (LGQGSYGKV) and Lys-91 each bind ATP. Residue Asp-184 is the Proton acceptor of the active site. At Ser-218 the chain carries Phosphoserine; by PDPK1. The AGC-kinase C-terminal domain occupies 319 to 388 (VTIDWNTLYR…VASSLIQEPS (70 aa)). Ser-377 carries the post-translational modification Phosphoserine. The Protein kinase 2 domain occupies 415–672 (YEIKEDIGVG…AMQVLKHPWV (258 aa)). Residues 421-429 (IGVGSYSVC) and Lys-444 each bind ATP. Catalysis depends on Asp-532, which acts as the Proton acceptor.

The protein belongs to the protein kinase superfamily. AGC Ser/Thr protein kinase family. S6 kinase subfamily. In terms of assembly, forms a complex with either MAPK1/ERK2 or MAPK3/ERK1 in quiescent cells. Transiently dissociates following mitogenic stimulation. Interacts with FBXO5; cooperate to induce the metaphase arrest of early blastomeres; increases and stabilizes interaction of FBXO5 with CDC20. Requires Mg(2+) as cofactor. Post-translationally, activated by phosphorylation at Ser-218 by PDPK1. Autophosphorylated on Ser-377, as part of the activation process. May be phosphorylated at Thr-356 and Ser-360 by MAPK1/ERK2 and MAPK3/ERK1. In terms of processing, N-terminal myristoylation results in an activated kinase in the absence of added growth factors. In terms of tissue distribution, widely expressed with higher expression in lung, skeletal muscle, brain, uterus, ovary, thyroid and prostate.

Its subcellular location is the nucleus. It is found in the cytoplasm. The enzyme catalyses L-seryl-[protein] + ATP = O-phospho-L-seryl-[protein] + ADP + H(+). It carries out the reaction L-threonyl-[protein] + ATP = O-phospho-L-threonyl-[protein] + ADP + H(+). Its activity is regulated as follows. Upon extracellular signal or mitogen stimulation, phosphorylated at Thr-570 in the C-terminal kinase domain (CTKD) by MAPK1/ERK2 and MAPK3/ERK1. The activated CTKD then autophosphorylates Ser-377, allowing binding of PDPK1, which in turn phosphorylates Ser-218 in the N-terminal kinase domain (NTDK) leading to the full activation of the protein and subsequent phosphorylation of the substrates by the NTKD. In terms of biological role, serine/threonine-protein kinase that acts downstream of ERK (MAPK1/ERK2 and MAPK3/ERK1) signaling and mediates mitogenic and stress-induced activation of transcription factors, regulates translation, and mediates cellular proliferation, survival, and differentiation. May function as tumor suppressor in epithelial ovarian cancer cells. The sequence is that of Ribosomal protein S6 kinase alpha-2 (RPS6KA2) from Homo sapiens (Human).